The sequence spans 101 residues: A-type ATP synthase subunit F (101 aa).

Belongs to the V-ATPase F subunit family. As to quaternary structure, has multiple subunits with at least A(3), B(3), C, D, E, F, H, I and proteolipid K(x).

The protein resides in the cell membrane. Its function is as follows. Component of the A-type ATP synthase that produces ATP from ADP in the presence of a proton gradient across the membrane. The protein is A-type ATP synthase subunit F of Archaeoglobus fulgidus (strain ATCC 49558 / DSM 4304 / JCM 9628 / NBRC 100126 / VC-16).